The sequence spans 5082 residues: Malformin synthetase mlfA (5082 aa).

The adenylation 1 stretch occupies residues glutamate 225–leucine 616. The Carrier 1 domain maps to serine 749 to glutamate 822. Serine 783 carries the O-(pantetheine 4'-phosphoryl)serine modification. Positions glutamate 860–alanine 1291 are condensation 1. Residues aspartate 1319–arginine 1708 form an adenylation 2 region. Positions threonine 1846 to alanine 1923 constitute a Carrier 2 domain. Position 1883 is an O-(pantetheine 4'-phosphoryl)serine (serine 1883). 2 disordered regions span residues glycine 1924–aspartate 1953 and glycine 1986–alanine 2012. Low complexity-rich tracts occupy residues serine 1926–aspartate 1950 and serine 1988–serine 2005. Positions glutamate 2058 to leucine 2473 are condensation 2. The tract at residues arginine 2496–leucine 2888 is adenylation 3. The region spanning arginine 3024–arginine 3100 is the Carrier 3 domain. O-(pantetheine 4'-phosphoryl)serine is present on serine 3061. 2 condensation regions span residues tryptophan 3117–glutamine 3582 and asparagine 3603–valine 4022. An adenylation 4 region spans residues histidine 4047–phenylalanine 4426. In terms of domain architecture, Carrier 4 spans methionine 4560–isoleucine 4636. Serine 4597 is subject to O-(pantetheine 4'-phosphoryl)serine. The condensation 5 stretch occupies residues aspartate 4673–asparagine 5000.

It belongs to the NRP synthetase family.

It participates in secondary metabolite biosynthesis. Nonribosomal peptide synthetase; part of the gene cluster that mediates the biosynthesis of malformins, cyclic pentapeptides with a disulfide bond between 2 consecutive cysteins, that show potential anti-tumor as well as antimalarial and antitrypanosomal properties. The nonribosomal peptide synthetase mlfA is responsible of the formation of the cyclic pentapeptide. The malformin biosynthesis clusters in malformin-producing fungi also contain enzymes involved in the formation of the disulfide bond between the two consecutive cysteins within malformins, in addition to additional tailoring enzymes such as methyltransferases or oxidoreductases. They are also composed of up to 4 major facilitator superfamily transporters, and transcription factors probably involved in the regulation of the expression of those clusters. The chain is Malformin synthetase mlfA from Aspergillus luchuensis (strain CBS 106.47).